The following is a 403-amino-acid chain: Zinc metalloproteinase nas-8 (403 aa).

A signal peptide spans 1–29; the sequence is MRRNDLLNNKITIFLSSLSLFVIIIPIYA. Positions 30–111 are excised as a propeptide; that stretch reads AEKDLLPPST…DPKNSESLRR (82 aa). The Peptidase M12A domain maps to 112 to 307; sequence NGVITGTRKW…LKMNLMYQCS (196 aa). Disulfide bonds link C154-C306, C176-C195, C338-C372, C345-C365, and C352-C369. H203 contacts Zn(2+). The active site involves E204. Zn(2+) contacts are provided by H207 and H213. The 35-residue stretch at 338–372 folds into the ShKT domain; sequence CRDRTNLCWRWIDRCKSFFFEQIMKEFCSLSCGYC. A glycan (N-linked (GlcNAc...) asparagine) is linked at N386.

Requires Zn(2+) as cofactor.

It localises to the secreted. The enzyme catalyses Hydrolysis of peptide bonds in substrates containing five or more amino acids, preferentially with Ala in P1', and Pro in P2'.. Metalloprotease. The protein is Zinc metalloproteinase nas-8 (nas-8) of Caenorhabditis elegans.